Here is a 303-residue protein sequence, read N- to C-terminus: Recombination-associated protein RdgC (303 aa).

It belongs to the RdgC family.

Its subcellular location is the cytoplasm. It localises to the nucleoid. In terms of biological role, may be involved in recombination. The protein is Recombination-associated protein RdgC of Edwardsiella ictaluri (strain 93-146).